A 951-amino-acid polypeptide reads, in one-letter code: Valine--tRNA ligase (951 aa).

Positions 42 to 52 (PNVTGSLHMGH) match the 'HIGH' region motif. The 'KMSKS' region signature appears at 554–558 (KMSKS). Lysine 557 contacts ATP. Positions 882-951 (LIDKDAELAR…EEQKATIAAL (70 aa)) form a coiled coil.

It belongs to the class-I aminoacyl-tRNA synthetase family. ValS type 1 subfamily. As to quaternary structure, monomer.

The protein localises to the cytoplasm. The catalysed reaction is tRNA(Val) + L-valine + ATP = L-valyl-tRNA(Val) + AMP + diphosphate. Functionally, catalyzes the attachment of valine to tRNA(Val). As ValRS can inadvertently accommodate and process structurally similar amino acids such as threonine, to avoid such errors, it has a 'posttransfer' editing activity that hydrolyzes mischarged Thr-tRNA(Val) in a tRNA-dependent manner. This is Valine--tRNA ligase from Vibrio vulnificus (strain CMCP6).